We begin with the raw amino-acid sequence, 389 residues long: Cellobiose 2-epimerase (389 aa).

This sequence belongs to the cellobiose 2-epimerase family. As to quaternary structure, monomer.

It carries out the reaction D-cellobiose = beta-D-glucosyl-(1-&gt;4)-D-mannopyranose. Its function is as follows. Catalyzes the reversible epimerization of cellobiose to 4-O-beta-D-glucopyranosyl-D-mannose (Glc-Man). Catalyzes epimerization but also isomerization for beta-1,4- and alpha-1,4-gluco-oligosaccharides. Can use cellobiose, lactose, cellotriose, maltose and maltotriose. The chain is Cellobiose 2-epimerase from Dictyoglomus turgidum (strain DSM 6724 / Z-1310).